Consider the following 270-residue polypeptide: Hydroxyethylthiazole kinase (270 aa).

Substrate is bound at residue M44. ATP is bound by residues R119 and T165. Substrate is bound at residue G192.

The protein belongs to the Thz kinase family. It depends on Mg(2+) as a cofactor.

It catalyses the reaction 5-(2-hydroxyethyl)-4-methylthiazole + ATP = 4-methyl-5-(2-phosphooxyethyl)-thiazole + ADP + H(+). Its pathway is cofactor biosynthesis; thiamine diphosphate biosynthesis; 4-methyl-5-(2-phosphoethyl)-thiazole from 5-(2-hydroxyethyl)-4-methylthiazole: step 1/1. Functionally, catalyzes the phosphorylation of the hydroxyl group of 4-methyl-5-beta-hydroxyethylthiazole (THZ). The polypeptide is Hydroxyethylthiazole kinase (Corynebacterium efficiens (strain DSM 44549 / YS-314 / AJ 12310 / JCM 11189 / NBRC 100395)).